The following is a 280-amino-acid chain: Ribosomal RNA small subunit methyltransferase A (280 aa).

S-adenosyl-L-methionine-binding residues include N18, L20, G45, E66, D89, and N110.

It belongs to the class I-like SAM-binding methyltransferase superfamily. rRNA adenine N(6)-methyltransferase family. RsmA subfamily.

It is found in the cytoplasm. The catalysed reaction is adenosine(1518)/adenosine(1519) in 16S rRNA + 4 S-adenosyl-L-methionine = N(6)-dimethyladenosine(1518)/N(6)-dimethyladenosine(1519) in 16S rRNA + 4 S-adenosyl-L-homocysteine + 4 H(+). In terms of biological role, specifically dimethylates two adjacent adenosines (A1518 and A1519) in the loop of a conserved hairpin near the 3'-end of 16S rRNA in the 30S particle. May play a critical role in biogenesis of 30S subunits. In Cupriavidus necator (strain ATCC 17699 / DSM 428 / KCTC 22496 / NCIMB 10442 / H16 / Stanier 337) (Ralstonia eutropha), this protein is Ribosomal RNA small subunit methyltransferase A.